Reading from the N-terminus, the 323-residue chain is Methionyl-tRNA formyltransferase (323 aa).

S121–P124 is a (6S)-5,6,7,8-tetrahydrofolate binding site.

It belongs to the Fmt family.

The enzyme catalyses L-methionyl-tRNA(fMet) + (6R)-10-formyltetrahydrofolate = N-formyl-L-methionyl-tRNA(fMet) + (6S)-5,6,7,8-tetrahydrofolate + H(+). Its function is as follows. Attaches a formyl group to the free amino group of methionyl-tRNA(fMet). The formyl group appears to play a dual role in the initiator identity of N-formylmethionyl-tRNA by promoting its recognition by IF2 and preventing the misappropriation of this tRNA by the elongation apparatus. The polypeptide is Methionyl-tRNA formyltransferase (Desulfotalea psychrophila (strain LSv54 / DSM 12343)).